Consider the following 585-residue polypeptide: CTP synthase (585 aa).

The interval 1-281 (MPALRKHPHT…DAYVVRRLNL (281 aa)) is amidoligase domain. S23 is a CTP binding site. S23 lines the UTP pocket. ATP-binding positions include 24-29 (SLGKGL) and D81. Residues D81 and E155 each coordinate Mg(2+). Residues 162–164 (DIE), 202–207 (KTKPTQ), and K238 contribute to the CTP site. UTP-binding positions include 202 to 207 (KTKPTQ) and K238. The 249-residue stretch at 306-554 (RIALVGKYID…VGAAVEYNNG (249 aa)) folds into the Glutamine amidotransferase type-1 domain. G369 is a binding site for L-glutamine. The active-site Nucleophile; for glutamine hydrolysis is C396. L-glutamine-binding positions include 397–400 (LGLQ), E419, and R480. Active-site residues include H527 and E529. Residues 564–585 (IPTADHQSNGAEHALEDAPARG) form a disordered region. Basic and acidic residues predominate over residues 576 to 585 (HALEDAPARG).

Belongs to the CTP synthase family. As to quaternary structure, homotetramer.

The enzyme catalyses UTP + L-glutamine + ATP + H2O = CTP + L-glutamate + ADP + phosphate + 2 H(+). The catalysed reaction is L-glutamine + H2O = L-glutamate + NH4(+). It catalyses the reaction UTP + NH4(+) + ATP = CTP + ADP + phosphate + 2 H(+). It functions in the pathway pyrimidine metabolism; CTP biosynthesis via de novo pathway; CTP from UDP: step 2/2. With respect to regulation, allosterically activated by GTP, when glutamine is the substrate; GTP has no effect on the reaction when ammonia is the substrate. The allosteric effector GTP functions by stabilizing the protein conformation that binds the tetrahedral intermediate(s) formed during glutamine hydrolysis. Inhibited by the product CTP, via allosteric rather than competitive inhibition. In terms of biological role, catalyzes the ATP-dependent amination of UTP to CTP with either L-glutamine or ammonia as the source of nitrogen. Regulates intracellular CTP levels through interactions with the four ribonucleotide triphosphates. The chain is CTP synthase from Mycolicibacterium gilvum (strain PYR-GCK) (Mycobacterium gilvum (strain PYR-GCK)).